The chain runs to 478 residues: MDRSLGWQGNSVPEDRTEAGIKRFLEDTTDDGELSKFVKDFSGNASCHPPEAKTWASRPQVPEPRPQAPDLYDDDLEFRPPSRPQSSDNQQYFCAPAPLSPSARPRSPWGKLDPYDSSEDDKEYVGFATLPNQVHRKSVKKGFDFTLMVAGESGLGKSTLVNSLFLTDLYRDRKLLGAEERIMQTVEITKHAVDIEEKGVRLRLTIVDTPGFGDAVNNTECWKPVAEYIDQQFEQYFRDESGLNRKNIQDNRVHCCLYFISPFGHGLRPLDVEFMKALHQRVNIVPILAKADTLTPPEVDHKKRKIREEIEHFGIKIYQFPDCDSDEDEDFKLQDQALKESIPFAVIGSNTVVEARGRRVRGRLYPWGIVEVENPGHCDFVKLRTMLVRTHMQDLKDVTRETHYENYRAQCIQSMTRLVVKERNRNKLTRESGTDFPIPAVPPGTDPETEKLIREKDEELRRMQEMLHKIQKQMKENY.

Residues 1-115 are disordered; it reads MDRSLGWQGN…RSPWGKLDPY (115 aa). Residues 13-26 are compositionally biased toward basic and acidic residues; it reads PEDRTEAGIKRFLE. Positions 95-108 are enriched in low complexity; sequence APAPLSPSARPRSP. Phosphoserine occurs at positions 117 and 118. One can recognise a Septin-type G domain in the interval 141 to 414; the sequence is KGFDFTLMVA…ENYRAQCIQS (274 aa). The tract at residues 151–158 is G1 motif; that stretch reads GESGLGKS. GTP-binding positions include 151–158 and T185; that span reads GESGLGKS. Positions 208 to 211 are G3 motif; that stretch reads DTPG. The interval 289–292 is G4 motif; it reads AKAD. 290 to 298 contributes to the GTP binding site; it reads KADTLTPPE. Phosphoserine is present on S325. Residues G348 and R363 each contribute to the GTP site. The segment at 428 to 448 is disordered; sequence LTRESGTDFPIPAVPPGTDPE. Phosphoserine is present on S432. A Phosphothreonine modification is found at T434. The stretch at 447–478 forms a coiled coil; it reads PETEKLIREKDEELRRMQEMLHKIQKQMKENY.

It belongs to the TRAFAC class TrmE-Era-EngA-EngB-Septin-like GTPase superfamily. Septin GTPase family. Septins polymerize into heterooligomeric protein complexes that form filaments, and can associate with cellular membranes, actin filaments and microtubules. GTPase activity is required for filament formation. Interacts with SEPTIN8. In a mesenchymal cell line, interacts with SEPTIN9 isoform 2 variants HNA Trp-106 and Phe-111, but not the wild type SEPTIN9. Component of a septin core octameric complex consisting of SEPTIN12, SEPTIN7, SEPTIN6 and SEPTIN2 or SEPTIN4 in the order 12-7-6-2-2-6-7-12 or 12-7-6-4-4-6-7-12. Interacts with SEPTIN14 (via C-terminus). Interacts with DYRK1A. Interacts with SLC6A3/DAT and SNCA/alpha-synuclein. Interacts with STX1A; in the striatum. Interacts with XIAP (via BIR3 domain) following the induction of apoptosis. Interacts with AREL1 (via HECT domain); in the cytoplasm following induction of apoptosis. As to quaternary structure, part of a complex composed of SEPTIN4 isoform ARTS, XIAP and BCL2, within the complex interacts with both BCL2 (via BH3 domain) and XIAP, ARTS acts as a scaffold protein and stabilizes the complex. Interacts with XIAP (via BIR3 domain) following the induction of apoptosis. In terms of processing, phosphorylated by DYRK1A. Post-translationally, ubiquitinated by AREL1. Widely expressed in adult and fetal tissues with highest expression in adult brain (at protein level), heart, liver and adrenal gland and fetal heart, kidney, liver and lung. Expressed in presynaptic terminals of dopaminergic neurons projecting from the substantia nigra pars compacta to the striatum (at protein level). Expressed in axonal varicosities in dopaminergic nerve terminals (at protein level). Expressed in the putamen and in the adjacent cerebral cortex (at protein level). Expressed in colonic crypts (at protein level). Also expressed in colorectal cancers and malignant melanomas. Expressed in platelets. As to expression, highly expressed in the brain and heart.

Its subcellular location is the cytoplasm. The protein resides in the cell projection. The protein localises to the cilium. It is found in the flagellum. It localises to the cytoplasmic vesicle. Its subcellular location is the secretory vesicle. The protein resides in the axon. The protein localises to the dendrite. It is found in the perikaryon. It localises to the synapse. Its subcellular location is the mitochondrion. The protein resides in the nucleus. Filament-forming cytoskeletal GTPase. Pro-apoptotic protein involved in LGR5-positive intestinal stem cell and Paneth cell expansion in the intestines, via its interaction with XIAP. May also play a role in the regulation of cell fate in the intestine. Positive regulator of apoptosis involved in hematopoietic stem cell homeostasis; via its interaction with XIAP. Negative regulator of repair and hair follicle regeneration in response to injury, due to inhibition of hair follicle stem cell proliferation, potentially via its interaction with XIAP. Plays an important role in male fertility and sperm motility. During spermiogenesis, essential for the establishment of the annulus (a fibrous ring structure connecting the midpiece and the principal piece of the sperm flagellum) which is a requisite for the structural and mechanical integrity of the sperm. Involved in the migration of cortical neurons and the formation of neuron leading processes during embryonic development. Required for dopaminergic metabolism in presynaptic autoreceptors; potentially via activity as a presynaptic scaffold protein. Its function is as follows. Required for the induction of cell death mediated by TGF-beta and possibly by other apoptotic stimuli. Induces apoptosis through binding and inhibition of XIAP resulting in significant reduction in XIAP levels, leading to caspase activation and cell death. Mediates the interaction between BCL2 and XIAP, thereby positively regulating the ubiquitination and degradation of BCL2 and promoting apoptosis. In Homo sapiens (Human), this protein is Septin-4.